The primary structure comprises 219 residues: Glutathione S-transferase U19 (219 aa).

The GST N-terminal domain occupies 3–82 (NEVILLDFWP…YIDEVWSHKN (80 aa)). Residues 13–14 (SM), 39–40 (NK), 53–54 (KI), and 66–67 (ES) each bind glutathione. The region spanning 88-208 (DPYLRAQARF…LPDPEKVTEF (121 aa)) is the GST C-terminal domain. The residue at position 198 (S198) is a Phosphoserine.

The protein belongs to the GST superfamily. Tau family.

It localises to the cytoplasm. Its subcellular location is the cytosol. It carries out the reaction RX + glutathione = an S-substituted glutathione + a halide anion + H(+). In terms of biological role, catalyzes the glutathionylation of 12-oxophytodienoate (OPDA). In vitro, possesses glutathione S-transferase activity toward 1-chloro-2,4-dinitrobenzene (CDNB) and benzyl isothiocyanate (BITC), and glutathione peroxidase activity toward cumene hydroperoxide. In Arabidopsis thaliana (Mouse-ear cress), this protein is Glutathione S-transferase U19 (GSTU19).